The primary structure comprises 124 residues: Large ribosomal subunit protein bL17 (124 aa).

The protein belongs to the bacterial ribosomal protein bL17 family. As to quaternary structure, part of the 50S ribosomal subunit. Contacts protein L32.

This chain is Large ribosomal subunit protein bL17, found in Mycoplasma pneumoniae (strain ATCC 29342 / M129 / Subtype 1) (Mycoplasmoides pneumoniae).